The following is a 392-amino-acid chain: Phospho-N-acetylmuramoyl-pentapeptide-transferase (392 aa).

The next 11 membrane-spanning stretches (helical) occupy residues 24–44, 76–96, 100–120, 137–157, 170–190, 193–213, 225–245, 262–282, 289–309, 314–334, and 369–389; these read YLTM…LLAG, TMGG…WFDL, FVWI…VDDW, YFWQ…CISE, WVQS…VPFF, VSYP…IVGA, GLAI…AYVT, SGEL…FLWF, VFMG…IAVI, IVLA…MLQV, and QVVI…LSTL.

This sequence belongs to the glycosyltransferase 4 family. MraY subfamily. It depends on Mg(2+) as a cofactor.

The protein localises to the cell inner membrane. It catalyses the reaction UDP-N-acetyl-alpha-D-muramoyl-L-alanyl-gamma-D-glutamyl-meso-2,6-diaminopimeloyl-D-alanyl-D-alanine + di-trans,octa-cis-undecaprenyl phosphate = di-trans,octa-cis-undecaprenyl diphospho-N-acetyl-alpha-D-muramoyl-L-alanyl-D-glutamyl-meso-2,6-diaminopimeloyl-D-alanyl-D-alanine + UMP. The protein operates within cell wall biogenesis; peptidoglycan biosynthesis. Functionally, catalyzes the initial step of the lipid cycle reactions in the biosynthesis of the cell wall peptidoglycan: transfers peptidoglycan precursor phospho-MurNAc-pentapeptide from UDP-MurNAc-pentapeptide onto the lipid carrier undecaprenyl phosphate, yielding undecaprenyl-pyrophosphoryl-MurNAc-pentapeptide, known as lipid I. The protein is Phospho-N-acetylmuramoyl-pentapeptide-transferase of Delftia acidovorans (strain DSM 14801 / SPH-1).